Consider the following 222-residue polypeptide: UPF0758 protein YE0063 (222 aa).

An MPN domain is found at 100–222 (VLQNPEITQK…CVSFAERGWL (123 aa)). Residues His-171, His-173, and Asp-184 each contribute to the Zn(2+) site. Residues 171 to 184 (HNHPSGKAEPSQAD) carry the JAMM motif motif.

It belongs to the UPF0758 family. YicR subfamily.

This is UPF0758 protein YE0063 from Yersinia enterocolitica serotype O:8 / biotype 1B (strain NCTC 13174 / 8081).